The chain runs to 245 residues: Protein FAM133B (245 aa).

2 disordered regions span residues 19–38 (SRGP…NRPR) and 69–245 (WKKE…SDSP). Basic and acidic residues predominate over residues 69–80 (WKKELEKHREKL). Ser82 carries the post-translational modification Phosphoserine. The span at 89-102 (KKRQKKKKEKKKSG) shows a compositional bias: basic residues. A compositionally biased stretch (low complexity) spans 103 to 119 (RYSSSSSSSSDSSSSSS). Positions 128–140 (QTKRRKKKKSHCH) are enriched in basic residues. Residues 165–176 (KDITEREKDTKG) show a composition bias toward basic and acidic residues. Phosphoserine is present on residues Ser190, Ser191, Ser193, and Ser195. The span at 209 to 219 (SGEERERTTDK) shows a compositional bias: basic and acidic residues. Over residues 220–237 (AKKRRKHKKHSKKKKKKA) the composition is skewed to basic residues.

Belongs to the FAM133 family.

In Rattus norvegicus (Rat), this protein is Protein FAM133B (Fam133b).